A 92-amino-acid chain; its full sequence is Ribonuclease P protein component 1 (92 aa).

The protein belongs to the eukaryotic/archaeal RNase P protein component 1 family. Consists of a catalytic RNA component and at least 4-5 protein subunits.

The protein resides in the cytoplasm. The enzyme catalyses Endonucleolytic cleavage of RNA, removing 5'-extranucleotides from tRNA precursor.. Functionally, part of ribonuclease P, a protein complex that generates mature tRNA molecules by cleaving their 5'-ends. The chain is Ribonuclease P protein component 1 from Desulfurococcus amylolyticus (strain DSM 18924 / JCM 16383 / VKM B-2413 / 1221n) (Desulfurococcus kamchatkensis).